We begin with the raw amino-acid sequence, 455 residues long: Venom prothrombin activator trocarin-D (455 aa).

The signal sequence occupies residues 1–20; the sequence is MAPQLLLCLILTFLWSLPEA. A propeptide spanning residues 21–40 is cleaved from the precursor; that stretch reads ESNVFLKSKVANRFLQRTKR. Residues 41–86 form the Gla domain; that stretch reads SNSLFEEIRPGNIERECIEEKCSKEEAREVFEDNEKTETFWNVYVD. 11 positions are modified to 4-carboxyglutamate: glutamate 46, glutamate 47, glutamate 54, glutamate 56, glutamate 59, glutamate 60, glutamate 65, glutamate 66, glutamate 69, glutamate 72, and glutamate 75. Cysteine 57 and cysteine 62 are oxidised to a cystine. One can recognise an EGF-like 1; calcium-binding domain in the interval 86-122; sequence DGDQCSSNPCHYRGTCKDGIGSYTCTCLPNYEGKNCE. 11 disulfides stabilise this stretch: cysteine 90–cysteine 101, cysteine 95–cysteine 110, cysteine 112–cysteine 121, cysteine 129–cysteine 140, cysteine 136–cysteine 149, cysteine 151–cysteine 164, cysteine 172–cysteine 328, cysteine 216–cysteine 221, cysteine 236–cysteine 252, cysteine 376–cysteine 390, and cysteine 401–cysteine 429. O-linked (Hex...) serine glycosylation occurs at serine 92. In terms of domain architecture, EGF-like 2 spans 129–164; the sequence is CRVDNGNCWHFCKRVQSETQCSCAESYRLGVDGHSC. A propeptide spans 182–209 (activation peptide); sequence REASLPDFVQSQKATLLKKSDNPSPDIR. A Peptidase S1 domain is found at 210 to 453; that stretch reads IVNGMDCKLG…FIPWIKKIMS (244 aa). The Charge relay system role is filled by histidine 251. An N-linked (GlcNAc...) asparagine glycan is attached at asparagine 254. The Charge relay system role is filled by aspartate 308. The active-site Charge relay system is serine 405.

This sequence belongs to the peptidase S1 family. Snake venom subfamily. Heterodimer of a light chain and a heavy chain; disulfide-linked. In terms of processing, gamma-carboxyglutamate residues are formed by vitamin K dependent carboxylation. These residues are essential for the binding of calcium. Post-translationally, the O-linked saccharides at Ser-92 are a mixture of Xyl-Glc, and Glc along with smaller amounts of Xyl-GlcNAc, GlcNAc, Gal, GalNAc, Xyl-Gal, and Xyl-GalNAc, suggesting that the glycosyl transferases responsible for this modification are non-specific. The N-linked carbohydrate at Asn-254 (Asn-45 of the heavy chain) is a sialylated and diantennary oligosaccharide. As to expression, expressed by the venom gland.

It localises to the secreted. The enzyme catalyses Selective cleavage of Arg-|-Thr and then Arg-|-Ile bonds in prothrombin to form thrombin.. Its activity is regulated as follows. Activated by calcium and phospholipids. Snake prothrombin activator that attacks the hemostatic system of prey. This protein is functionally similar to blood coagulation factor Xa. Induces cyanosis and death in mice at 1 mg/kg body weight during blood clotting. This is Venom prothrombin activator trocarin-D from Tropidechis carinatus (Australian rough-scaled snake).